A 575-amino-acid polypeptide reads, in one-letter code: Isocitrate dehydrogenase kinase/phosphatase (575 aa).

ATP contacts are provided by residues 315–321 and Lys-336; that span reads APGVKGM. Residue Asp-371 is part of the active site.

Belongs to the AceK family.

The protein localises to the cytoplasm. It catalyses the reaction L-seryl-[isocitrate dehydrogenase] + ATP = O-phospho-L-seryl-[isocitrate dehydrogenase] + ADP + H(+). In terms of biological role, bifunctional enzyme which can phosphorylate or dephosphorylate isocitrate dehydrogenase (IDH) on a specific serine residue. This is a regulatory mechanism which enables bacteria to bypass the Krebs cycle via the glyoxylate shunt in response to the source of carbon. When bacteria are grown on glucose, IDH is fully active and unphosphorylated, but when grown on acetate or ethanol, the activity of IDH declines drastically concomitant with its phosphorylation. This is Isocitrate dehydrogenase kinase/phosphatase from Yersinia pseudotuberculosis serotype O:1b (strain IP 31758).